A 372-amino-acid polypeptide reads, in one-letter code: Alanine dehydrogenase (372 aa).

Arg-15 and Lys-75 together coordinate substrate. His-96 (proton donor/acceptor) is an active-site residue. NAD(+)-binding positions include Ser-134, 178–179 (TA), Asp-198, Ser-220, 239–240 (VL), 266–269 (IAID), Arg-279, and 298–301 (VANM). Catalysis depends on Asp-269, which acts as the Proton donor/acceptor.

Belongs to the AlaDH/PNT family. In terms of assembly, homohexamer.

It localises to the cytoplasm. The catalysed reaction is L-alanine + NAD(+) + H2O = pyruvate + NH4(+) + NADH + H(+). It participates in amino-acid degradation; L-alanine degradation via dehydrogenase pathway; NH(3) and pyruvate from L-alanine: step 1/1. Functionally, catalyzes the reversible reductive amination of pyruvate to L-alanine. A key factor in the assimilation of L-alanine as an energy source via the tricarboxylic acid cycle during sporulation. The polypeptide is Alanine dehydrogenase (ald) (Geobacillus stearothermophilus (Bacillus stearothermophilus)).